The following is a 298-amino-acid chain: Cyclin-dependent kinase 2 homolog (298 aa).

Positions 4-284 (YHKMEKIGEG…AKEALKHDYF (281 aa)) constitute a Protein kinase domain. Residues 10–18 (IGEGTYGVV) and K32 each bind ATP. Position 14 is a phosphothreonine (T14). Y15 bears the Phosphotyrosine mark. Catalysis depends on D125, which acts as the Proton acceptor. T158 carries the post-translational modification Phosphothreonine.

It belongs to the protein kinase superfamily. CMGC Ser/Thr protein kinase family. CDC2/CDKX subfamily. May form a complex composed of at least the catalytic subunit CRK2 and a cyclin. Mg(2+) is required as a cofactor.

Its subcellular location is the cytoplasm. The catalysed reaction is L-seryl-[protein] + ATP = O-phospho-L-seryl-[protein] + ADP + H(+). The enzyme catalyses L-threonyl-[protein] + ATP = O-phospho-L-threonyl-[protein] + ADP + H(+). It carries out the reaction [DNA-directed RNA polymerase] + ATP = phospho-[DNA-directed RNA polymerase] + ADP + H(+). With respect to regulation, phosphorylation at Thr-14 or Tyr-15 inactivates the enzyme, while phosphorylation at Thr-158 activates it. Serine/threonine-protein kinase. Involved in the control of the cell cycle. Required for entry into S-phase and mitosis. Probable component of the kinase complex that phosphorylates the repetitive C-terminus of RNA polymerase II. The chain is Cyclin-dependent kinase 2 homolog from Theileria parva (East coast fever infection agent).